The chain runs to 130 residues: Small ribosomal subunit protein uS11c (130 aa).

The protein belongs to the universal ribosomal protein uS11 family. In terms of assembly, part of the 30S ribosomal subunit.

It localises to the plastid. It is found in the chloroplast. The sequence is that of Small ribosomal subunit protein uS11c from Spirogyra maxima (Green alga).